Reading from the N-terminus, the 729-residue chain is Palmitoyltransferase akr1 (729 aa).

The segment covering 1–11 (MVHHDGADAHA) has biased composition (basic and acidic residues). The interval 1–28 (MVHHDGADAHAGHAAPAQPPMKSDTATP) is disordered. The Cytoplasmic portion of the chain corresponds to 1 to 297 (MVHHDGADAH…DRRSFMTKFT (297 aa)). ANK repeat units lie at residues 76-105 (EGIT…EINK), 110-139 (SVAT…DPLI), 143-172 (QGYN…PVDV), 176-205 (YGHT…SVHA), and 209-238 (QGFT…DRFA). 2 helical membrane-spanning segments follow: residues 298 to 318 (FLWP…MPVF) and 319 to 339 (VGIP…QQVI). The Cytoplasmic portion of the chain corresponds to 340 to 354 (AYAPPDMRQLQKTPW). A helical transmembrane segment spans residues 355-375 (MAGIFAGSLFLCIMNWLLHIF). Residues 376–383 (GSTMFGQD) are Lumenal-facing. Residues 384-404 (SAVIPNLLFAFFISMTIWFYI) form a helical membrane-spanning segment. Residues 405–483 (RCMVDDPGFV…YNCIGVNNHR (79 aa)) lie on the Cytoplasmic side of the membrane. The DHHC domain maps to 440 to 490 (NFCVTCMIRTPLRSKHCRRCQRCVAKHDHHCPWVYNCIGVNNHRHFFFYLI). Cys470 (S-palmitoyl cysteine intermediate) is an active-site residue. Residues 484 to 504 (HFFFYLINLTLSVVTYDWLTY) traverse the membrane as a helical segment. At 505-534 (RYLSTLSETASDECNILAPSLCRIVNADTY) the chain is on the lumenal side. A helical membrane pass occupies residues 535 to 555 (SLLTAIWASLQLTWVSMLLFV). At 556 to 729 (QFVQVSSAMT…GYESVAGEEV (174 aa)) the chain is on the cytoplasmic side. Disordered stretches follow at residues 587 to 620 (STGA…HGHN) and 709 to 729 (TSGG…GEEV). Residues 592–603 (LNPPSLPAPGPS) are compositionally biased toward pro residues. Residues 611–620 (HGGRHAHGHN) show a composition bias toward basic residues.

It belongs to the DHHC palmitoyltransferase family. AKR/ZDHHC17 subfamily.

Its subcellular location is the early endosome membrane. The protein localises to the golgi apparatus membrane. It carries out the reaction L-cysteinyl-[protein] + hexadecanoyl-CoA = S-hexadecanoyl-L-cysteinyl-[protein] + CoA. Palmitoyltransferase specific for casein kinase 1. This chain is Palmitoyltransferase akr1 (ptr-1), found in Neurospora crassa (strain ATCC 24698 / 74-OR23-1A / CBS 708.71 / DSM 1257 / FGSC 987).